Reading from the N-terminus, the 157-residue chain is 2-C-methyl-D-erythritol 2,4-cyclodiphosphate synthase (157 aa).

The a divalent metal cation site is built by Asp9 and His11. Residues 9-11 (DVH) and 35-36 (HS) each bind 4-CDP-2-C-methyl-D-erythritol 2-phosphate. His43 provides a ligand contact to a divalent metal cation. Residues 57–59 (DIG), 62–66 (FPDTD), 101–107 (AQKPKMA), 133–136 (TTTE), Phe140, and Arg143 contribute to the 4-CDP-2-C-methyl-D-erythritol 2-phosphate site.

It belongs to the IspF family. In terms of assembly, homotrimer. Requires a divalent metal cation as cofactor.

The catalysed reaction is 4-CDP-2-C-methyl-D-erythritol 2-phosphate = 2-C-methyl-D-erythritol 2,4-cyclic diphosphate + CMP. The protein operates within isoprenoid biosynthesis; isopentenyl diphosphate biosynthesis via DXP pathway; isopentenyl diphosphate from 1-deoxy-D-xylulose 5-phosphate: step 4/6. Involved in the biosynthesis of isopentenyl diphosphate (IPP) and dimethylallyl diphosphate (DMAPP), two major building blocks of isoprenoid compounds. Catalyzes the conversion of 4-diphosphocytidyl-2-C-methyl-D-erythritol 2-phosphate (CDP-ME2P) to 2-C-methyl-D-erythritol 2,4-cyclodiphosphate (ME-CPP) with a corresponding release of cytidine 5-monophosphate (CMP). The chain is 2-C-methyl-D-erythritol 2,4-cyclodiphosphate synthase from Halalkalibacterium halodurans (strain ATCC BAA-125 / DSM 18197 / FERM 7344 / JCM 9153 / C-125) (Bacillus halodurans).